The following is a 193-amino-acid chain: MGVHECPAWLWLLLSLLSLPLGLPVLGAPPRLICDSRVLERYLLEAKEAENITTGCAEHCSLNENITVPDTKVNFYAWKRMEVGQQAVEVWQGLALLSEAVLRGQALLVNSSQPWEPLQLHVDKAVSGLRSLTTLLRALGAQKEAISPPDAASAAPLRTITADTFRKLFRVYSNFLRGKLKLYTGEACRTGDR.

A signal peptide spans 1–27; that stretch reads MGVHECPAWLWLLLSLLSLPLGLPVLG. 2 cysteine pairs are disulfide-bonded: C34/C188 and C56/C60. N-linked (GlcNAc...) asparagine glycosylation is present at N51. N-linked (GlcNAc...) asparagine glycosylation is found at N65 and N110. Residue S153 is glycosylated (O-linked (GalNAc...) serine).

It belongs to the EPO/TPO family. In terms of tissue distribution, produced by kidney or liver of adult mammals and by liver of fetal or neonatal mammals.

It localises to the secreted. In terms of biological role, hormone involved in the regulation of erythrocyte proliferation and differentiation and the maintenance of a physiological level of circulating erythrocyte mass. Binds to EPOR leading to EPOR dimerization and JAK2 activation thereby activating specific downstream effectors, including STAT1 and STAT3. This Homo sapiens (Human) protein is Erythropoietin (EPO).